The primary structure comprises 290 residues: Lipoyl synthase (290 aa).

Residues C44, C49, C55, C70, C74, C77, and S281 each contribute to the [4Fe-4S] cluster site. The Radical SAM core domain maps to 56–270 (WRCGTATFMI…KQIGLEKGFS (215 aa)).

The protein belongs to the radical SAM superfamily. Lipoyl synthase family. The cofactor is [4Fe-4S] cluster.

Its subcellular location is the cytoplasm. It catalyses the reaction [[Fe-S] cluster scaffold protein carrying a second [4Fe-4S](2+) cluster] + N(6)-octanoyl-L-lysyl-[protein] + 2 oxidized [2Fe-2S]-[ferredoxin] + 2 S-adenosyl-L-methionine + 4 H(+) = [[Fe-S] cluster scaffold protein] + N(6)-[(R)-dihydrolipoyl]-L-lysyl-[protein] + 4 Fe(3+) + 2 hydrogen sulfide + 2 5'-deoxyadenosine + 2 L-methionine + 2 reduced [2Fe-2S]-[ferredoxin]. The protein operates within protein modification; protein lipoylation via endogenous pathway; protein N(6)-(lipoyl)lysine from octanoyl-[acyl-carrier-protein]: step 2/2. Catalyzes the radical-mediated insertion of two sulfur atoms into the C-6 and C-8 positions of the octanoyl moiety bound to the lipoyl domains of lipoate-dependent enzymes, thereby converting the octanoylated domains into lipoylated derivatives. In Treponema denticola (strain ATCC 35405 / DSM 14222 / CIP 103919 / JCM 8153 / KCTC 15104), this protein is Lipoyl synthase.